The chain runs to 120 residues: Protein ORF-C (120 aa).

It is found in the host mitochondrion. Functionally, induces alteration of mitochondrial function that results in apoptosis contributing to tumor regression. The polypeptide is Protein ORF-C (orfC) (Walleye dermal sarcoma virus (WDSV)).